The sequence spans 366 residues: S-adenosylmethionine decarboxylase proenzyme 1 (366 aa).

Active-site residues include glutamate 9 and glutamate 12. Glutamate 68 contacts substrate. The active-site Schiff-base intermediate with substrate; via pyruvic acid is the serine 69. Serine 69 bears the Pyruvic acid (Ser); by autocatalysis mark. Cysteine 83 functions as the Proton donor; for catalytic activity in the catalytic mechanism. Residues serine 233 and histidine 246 each act as proton acceptor; for processing activity in the active site. Glutamate 250 is a substrate binding site.

It belongs to the eukaryotic AdoMetDC family. Requires pyruvate as cofactor. Post-translationally, is synthesized initially as an inactive proenzyme. Formation of the active enzyme involves a self-maturation process in which the active site pyruvoyl group is generated from an internal serine residue via an autocatalytic post-translational modification. Two non-identical subunits are generated from the proenzyme in this reaction, and the pyruvate is formed at the N-terminus of the alpha chain, which is derived from the carboxyl end of the proenzyme. The post-translation cleavage follows an unusual pathway, termed non-hydrolytic serinolysis, in which the side chain hydroxyl group of the serine supplies its oxygen atom to form the C-terminus of the beta chain, while the remainder of the serine residue undergoes an oxidative deamination to produce ammonia and the pyruvoyl group blocking the N-terminus of the alpha chain.

The enzyme catalyses S-adenosyl-L-methionine + H(+) = S-adenosyl 3-(methylsulfanyl)propylamine + CO2. It participates in amine and polyamine biosynthesis; S-adenosylmethioninamine biosynthesis; S-adenosylmethioninamine from S-adenosyl-L-methionine: step 1/1. Its function is as follows. Essential for biosynthesis of the polyamines spermidine and spermine. Essential for polyamine homeostasis, and normal plant embryogenesis, growth and development. This is S-adenosylmethionine decarboxylase proenzyme 1 from Arabidopsis thaliana (Mouse-ear cress).